Reading from the N-terminus, the 337-residue chain is MTDHALLLVNLGSPASTSVADVRRYLNQFLMDPYVIDLPWPVRRLLVSLILIKRPEQSAHAYASIWWDEGSPLVVLTRRLQAAMVEHWPHGPVEIAMRYGEPALPDVLERLAAQGVRKVTLAPLYPQFADSTVTTVVELAKQTIAERKLPLQTRILQPFYDHPDYIQALAASARPYLEQQYDHLLLSFHGLPERHLKKLDPSGNHDFQAADCCKDASAEMRAVCYRGQCLATAKAFAQKMGIPDGKWSVSFQSRLGRAKWIEPYTETRLDELGKAGVKKLLVMCPAFVADCIETLEEIGDRGKEQFIEAGGKELVLVPCLNDHPEWVRVLAGMCENA.

Positions 189 and 293 each coordinate Fe cation.

Belongs to the ferrochelatase family.

The protein localises to the cytoplasm. The catalysed reaction is heme b + 2 H(+) = protoporphyrin IX + Fe(2+). It participates in porphyrin-containing compound metabolism; protoheme biosynthesis; protoheme from protoporphyrin-IX: step 1/1. Its function is as follows. Catalyzes the ferrous insertion into protoporphyrin IX. This chain is Ferrochelatase, found in Pseudomonas entomophila (strain L48).